A 95-amino-acid chain; its full sequence is Small ribosomal subunit protein uS19 (95 aa).

This sequence belongs to the universal ribosomal protein uS19 family.

Functionally, protein S19 forms a complex with S13 that binds strongly to the 16S ribosomal RNA. The polypeptide is Small ribosomal subunit protein uS19 (Thermosipho africanus (strain TCF52B)).